We begin with the raw amino-acid sequence, 150 residues long: UPF0208 membrane protein VV1_2222 (150 aa).

Helical transmembrane passes span 42-62 and 70-90; these read FGIK…MAFN and AIVM…WLGH.

This sequence belongs to the UPF0208 family.

Its subcellular location is the cell inner membrane. The sequence is that of UPF0208 membrane protein VV1_2222 from Vibrio vulnificus (strain CMCP6).